Consider the following 22-residue polypeptide: Fuctinin-2 (22 aa).

The disordered stretch occupies residues 1 to 22 (ELPGLPKGEKEQQEAIEHIDEV). Positions 7 to 22 (KGEKEQQEAIEHIDEV) are enriched in basic and acidic residues.

The protein to human SET/PHAPII protein. As to quaternary structure, oligomer.

The protein resides in the cytoplasm. Its function is as follows. Has a role in the physiological regulation of fucosylation processes. This chain is Fuctinin-2, found in Rattus norvegicus (Rat).